A 73-amino-acid polypeptide reads, in one-letter code: Translation initiation factor IF-1 1 (73 aa).

The S1-like domain maps to 1–72; the sequence is MAKEELIEFG…TKGRINFRHK (72 aa).

Belongs to the IF-1 family. As to quaternary structure, component of the 30S ribosomal translation pre-initiation complex which assembles on the 30S ribosome in the order IF-2 and IF-3, IF-1 and N-formylmethionyl-tRNA(fMet); mRNA recruitment can occur at any time during PIC assembly.

The protein localises to the cytoplasm. Functionally, one of the essential components for the initiation of protein synthesis. Stabilizes the binding of IF-2 and IF-3 on the 30S subunit to which N-formylmethionyl-tRNA(fMet) subsequently binds. Helps modulate mRNA selection, yielding the 30S pre-initiation complex (PIC). Upon addition of the 50S ribosomal subunit IF-1, IF-2 and IF-3 are released leaving the mature 70S translation initiation complex. The polypeptide is Translation initiation factor IF-1 1 (Cupriavidus metallidurans (strain ATCC 43123 / DSM 2839 / NBRC 102507 / CH34) (Ralstonia metallidurans)).